Consider the following 66-residue polypeptide: Beta-defensin 134 (66 aa).

The N-terminal stretch at 1 to 19 (MKPLLVVFVFLFLWDPVLA) is a signal peptide. 3 disulfide bridges follow: Cys-32–Cys-58, Cys-38–Cys-52, and Cys-42–Cys-59.

The protein belongs to the beta-defensin family.

It is found in the secreted. Its function is as follows. Has antibacterial activity. The chain is Beta-defensin 134 (DEFB134) from Homo sapiens (Human).